The sequence spans 655 residues: MINEILDNKMSDIRSSGKNVKLESTTMTSVKDLPSWCFIKSRAMLKGDNKPFVVSVLNSSTETPSKGWKCVLFQTNINDKGQLWQLVDGHLLSQLYGSFVLDIDSDNNNGTDLIINSQIPSNNERQTWKLGSNGEIMNNQTKMFIGVKGSNSAPIDPSNNAQLVCESTTSVDNVCFQWDLEPSFPLNSILTQTTEPFPNYTDEKLKAYIYISNNLIKGIDDIRSQYTNSNYSFNSFSNELVNMKYPDSISKDSFDEIKTQLQSEFEQVDSIINLFNNYQQFHIGLFADNSARLNQIVSIIQFDDKTTSVAGSILSIISNILKLVLTFLPQPAGNFGNVMMGAISVSSAASTPNKVNVDPFKVELSKLWDSLSSNFEAILFNMGTMESMILKDWGKMKAVYQLLSTSLAWTPTMTSQLISTGATAYGISLLQMLLPEKYQIYCWNQNFDAKYGFAPGYPAPIPSDIPEYCTWTDENGDVLFIASTSDLRVHPIKEVMDMVWKDNVVVKKDFYRSRNGWSFPTSLVNRITRWLIPNVTNNTSIPMKYTIGDFKGDSKTTYQLDLPTFSTSYPLDVSHNNNGHNYHFTITITNALDNSKIASLVIIVSAVGGSFSKGQLGDHSVTKGYLIGDPIFNTSVRDSTSTCNIIVNIDYNDTN.

Positions 40-181 (KSRAMLKGDN…DNVCFQWDLE (142 aa)) constitute a Ricin B-type lectin domain.

This sequence belongs to the cup family.

The chain is Putative calcium up-regulated protein J (cupJ) from Dictyostelium discoideum (Social amoeba).